The sequence spans 543 residues: Germacrene A synthase (543 aa).

The Mg(2+) site is built by Asp296, Asp300, Asp439, and Glu447. The short motif at 296-300 is the DDXXD motif element; it reads DDTYD.

It belongs to the terpene synthase family. Tpsa subfamily. It depends on Mg(2+) as a cofactor. Mn(2+) is required as a cofactor. Barely detectable in leaves.

Its subcellular location is the plastid. The protein localises to the chloroplast. The enzyme catalyses (2E,6E)-farnesyl diphosphate = germacrene A + diphosphate. It catalyses the reaction (2E,6E)-farnesyl diphosphate = (1S,2S,4R)-beta-elemene + diphosphate. The protein operates within secondary metabolite biosynthesis; terpenoid biosynthesis. In terms of biological role, sesquiterpene synthase involved in the biosynthesis of volatile compounds widely used in aromatherapy and folk medicine, and present in culinary herbs. Mediates the conversion of (2E,6E)-farnesyl diphosphate (FPP) into germacrene A and beta-elemene. Not able to use (2E)-geranyl diphosphate (GPP) as substrate. The sequence is that of Germacrene A synthase from Lavandula viridis (Green lavender).